We begin with the raw amino-acid sequence, 971 residues long: Translation initiation factor IF-2 (971 aa).

The span at 48–63 shows a compositional bias: basic and acidic residues; the sequence is DHLRKSHGATDGDKRK. Disordered stretches follow at residues 48–86 and 100–381; these read DHLR…ARTI and DDVA…STFQ. A compositionally biased stretch (low complexity) spans 105–114; that stretch reads GADQGQAQVA. Positions 121-181 are enriched in basic and acidic residues; sequence ELKRREEEAR…EEEAATKRAA (61 aa). The segment covering 182–202 has biased composition (low complexity); the sequence is AEVAAAQQQAAAQQAAAEQEA. Over residues 210 to 261 the composition is skewed to basic and acidic residues; that stretch reads DEARAAAERAAQREAAKKAEDAAREAADKARAEQEEISKRRAAAEAEARAIR. A compositionally biased stretch (pro residues) spans 277-286; the sequence is PPKPVEPPKP. The segment covering 304-326 has biased composition (low complexity); sequence ARPAVKKPAGAAAPATTQAPAGA. Over residues 356–369 the composition is skewed to gly residues; it reads SSGGVDRGWRGGPK. The 170-residue stretch at 471–640 folds into the tr-type G domain; it reads PRPPVVTVMG…LLQAEVLELK (170 aa). A G1 region spans residues 480 to 487; the sequence is GHVDHGKT. 480 to 487 contributes to the GTP binding site; the sequence is GHVDHGKT. Residues 505 to 509 are G2; it reads GITQH. Residues 526-529 form a G3 region; that stretch reads DTPG. GTP-binding positions include 526 to 530 and 580 to 583; these read DTPGH and NKID. The interval 580-583 is G4; sequence NKID. The segment at 616 to 618 is G5; the sequence is SAK.

It belongs to the TRAFAC class translation factor GTPase superfamily. Classic translation factor GTPase family. IF-2 subfamily.

It is found in the cytoplasm. In terms of biological role, one of the essential components for the initiation of protein synthesis. Protects formylmethionyl-tRNA from spontaneous hydrolysis and promotes its binding to the 30S ribosomal subunits. Also involved in the hydrolysis of GTP during the formation of the 70S ribosomal complex. The protein is Translation initiation factor IF-2 of Burkholderia orbicola (strain AU 1054).